Consider the following 88-residue polypeptide: Large ribosomal subunit protein bL31B (88 aa).

The protein belongs to the bacterial ribosomal protein bL31 family. Type B subfamily. In terms of assembly, part of the 50S ribosomal subunit.

The polypeptide is Large ribosomal subunit protein bL31B (Corynebacterium glutamicum (strain R)).